The following is a 1967-amino-acid chain: RQC trigger complex helicase SLH1 (1967 aa).

One can recognise a Helicase ATP-binding 1 domain in the interval 297-485 (PVAYKTNENM…FLGVNRQIGM (189 aa)). Position 310–317 (310–317 (APTGAGKT)) interacts with ATP. The short motif at 427–430 (DEVH) is the DEVH box element. In terms of domain architecture, Helicase C-terminal 1 spans 516-735 (NIDKVAYDKL…NVDEAIEWLG (220 aa)). Residues 795–1100 (AKDLGRVSSD…GCESTHAISF (306 aa)) form the SEC63 1 domain. In terms of domain architecture, Helicase ATP-binding 2 spans 1149–1324 (YTLYNTNENA…WLGVKDHGLY (176 aa)). An ATP-binding site is contributed by 1162-1169 (SPTGSGKT). A DEAH box motif is present at residues 1266–1269 (DEIH). Positions 1355–1550 (MNKPVFMAIK…SLHKVLDDHL (196 aa)) constitute a Helicase C-terminal 2 domain. The SEC63 2 domain occupies 1626–1776 (ATPFLSISSY…MMQCIKQGYW (151 aa)).

This sequence belongs to the helicase family. SKI2 subfamily. In terms of assembly, component of the RQT (ribosome quality control trigger) complex, composed of SLH1, CUE3, and RQT4. Interacts with CUE3. Interacts with RQT4. Interacts with HEL2. Associates with translating ribosomes.

Its subcellular location is the cytoplasm. It localises to the cytosol. The catalysed reaction is ATP + H2O = ADP + phosphate + H(+). Functionally, involved in activation of the ribosome quality control (RQC) pathway, a pathway that degrades nascent peptide chains during problematic translation. Drives the splitting of stalled ribosomes that are polyubiquitinated in a HEL2-dependent manner, as part of the ribosome quality control trigger (RQT) complex. Also represses the translation of non-poly(A) mRNAs together with SKI2. May block translation by inhibiting translation initiation factor 5B (FUN12) action on mRNAs lacking a 3' poly(A) structure. Involved in antiviral defense, preventing L-A dsRNA virus propagation by specifically blocking translation of viral mRNAs. The sequence is that of RQC trigger complex helicase SLH1 from Saccharomyces cerevisiae (strain ATCC 204508 / S288c) (Baker's yeast).